Consider the following 79-residue polypeptide: Small ribosomal subunit protein bS16cz (79 aa).

Belongs to the bacterial ribosomal protein bS16 family.

The protein localises to the plastid. The protein resides in the chloroplast. The protein is Small ribosomal subunit protein bS16cz of Arabidopsis thaliana (Mouse-ear cress).